The primary structure comprises 125 residues: Large ribosomal subunit protein bL12 (125 aa).

It belongs to the bacterial ribosomal protein bL12 family. Homodimer. Part of the ribosomal stalk of the 50S ribosomal subunit. Forms a multimeric L10(L12)X complex, where L10 forms an elongated spine to which 2 to 4 L12 dimers bind in a sequential fashion. Binds GTP-bound translation factors.

Its function is as follows. Forms part of the ribosomal stalk which helps the ribosome interact with GTP-bound translation factors. Is thus essential for accurate translation. The sequence is that of Large ribosomal subunit protein bL12 from Caldanaerobacter subterraneus subsp. tengcongensis (strain DSM 15242 / JCM 11007 / NBRC 100824 / MB4) (Thermoanaerobacter tengcongensis).